The sequence spans 504 residues: ATP synthase subunit alpha (504 aa).

170–177 (GDRQTGKT) is a binding site for ATP.

This sequence belongs to the ATPase alpha/beta chains family. F-type ATPases have 2 components, CF(1) - the catalytic core - and CF(0) - the membrane proton channel. CF(1) has five subunits: alpha(3), beta(3), gamma(1), delta(1), epsilon(1). CF(0) has four main subunits: a, b, b' and c.

Its subcellular location is the cellular thylakoid membrane. It carries out the reaction ATP + H2O + 4 H(+)(in) = ADP + phosphate + 5 H(+)(out). Produces ATP from ADP in the presence of a proton gradient across the membrane. The alpha chain is a regulatory subunit. The chain is ATP synthase subunit alpha from Prochlorococcus marinus (strain MIT 9211).